We begin with the raw amino-acid sequence, 126 residues long: Small ribosomal subunit protein uS13 (126 aa).

A disordered region spans residues 99–126 (LRGQSTKNNARTRKGKRKTVANKKRVTK). Residues 108–126 (ARTRKGKRKTVANKKRVTK) show a composition bias toward basic residues.

The protein belongs to the universal ribosomal protein uS13 family. Part of the 30S ribosomal subunit. Forms a loose heterodimer with protein S19. Forms two bridges to the 50S subunit in the 70S ribosome.

Its function is as follows. Located at the top of the head of the 30S subunit, it contacts several helices of the 16S rRNA. In the 70S ribosome it contacts the 23S rRNA (bridge B1a) and protein L5 of the 50S subunit (bridge B1b), connecting the 2 subunits; these bridges are implicated in subunit movement. Contacts the tRNAs in the A and P-sites. The polypeptide is Small ribosomal subunit protein uS13 (Azobacteroides pseudotrichonymphae genomovar. CFP2).